The chain runs to 694 residues: Elongation factor G (694 aa).

The region spanning 9–288 (DAIRNIGIMA…VIVKWLPSPL (280 aa)) is the tr-type G domain. GTP is bound by residues 18 to 25 (AHIDAGKT), 82 to 86 (DTPGH), and 136 to 139 (NKMD).

This sequence belongs to the TRAFAC class translation factor GTPase superfamily. Classic translation factor GTPase family. EF-G/EF-2 subfamily.

The protein localises to the cytoplasm. Catalyzes the GTP-dependent ribosomal translocation step during translation elongation. During this step, the ribosome changes from the pre-translocational (PRE) to the post-translocational (POST) state as the newly formed A-site-bound peptidyl-tRNA and P-site-bound deacylated tRNA move to the P and E sites, respectively. Catalyzes the coordinated movement of the two tRNA molecules, the mRNA and conformational changes in the ribosome. This chain is Elongation factor G, found in Chlamydia trachomatis serovar L2 (strain ATCC VR-902B / DSM 19102 / 434/Bu).